A 462-amino-acid chain; its full sequence is cAMP-dependent protein kinase regulatory subunit (462 aa).

The tract at residues 54-203 (TPSPRFPPSP…RLKYAIEGNF (150 aa)) is dimerization and phosphorylation. The segment at 79 to 157 (FGANANPFGG…PTTDSYPAQY (79 aa)) is disordered. Low complexity predominate over residues 80-102 (GANANPFGGSSSNPNPFGGSASP). Ser164 carries the phosphoserine modification. 3',5'-cyclic AMP-binding positions include 204 to 333 (LFSH…FLEE), Glu282, Arg291, 336 to 453 (ILSS…KTGV), Glu401, and Arg410.

This sequence belongs to the cAMP-dependent kinase regulatory chain family. In terms of assembly, tetramer, composed of 2 regulatory (R) and 2 catalytic (C) subunits. In the presence of cAMP it dissociates into 2 active monomeric C subunits and an R dimer.

In Hypocrea atroviridis (Trichoderma atroviride), this protein is cAMP-dependent protein kinase regulatory subunit (pkar1).